The sequence spans 99 residues: DNA-directed RNA polymerase subunit omega (99 aa).

This sequence belongs to the RNA polymerase subunit omega family. In terms of assembly, the RNAP catalytic core consists of 2 alpha, 1 beta, 1 beta' and 1 omega subunit. When a sigma factor is associated with the core the holoenzyme is formed, which can initiate transcription.

The enzyme catalyses RNA(n) + a ribonucleoside 5'-triphosphate = RNA(n+1) + diphosphate. In terms of biological role, promotes RNA polymerase assembly. Latches the N- and C-terminal regions of the beta' subunit thereby facilitating its interaction with the beta and alpha subunits. This chain is DNA-directed RNA polymerase subunit omega, found in Xanthomonas oryzae pv. oryzae (strain MAFF 311018).